The sequence spans 253 residues: MAGHSKWSQIKRTKAVVDAKRGAVFTRLGREISVAARAGADPDGNFQLRTAINKAKAAGVPAANIERAIAKGCGAGGDGSQAFEEIRYEGYGPGGVAVLVEVLSDNRNRTAAELRLAFSKNGGNLGESGCVGFLFSHRSEVSLNATSAEGIDEDALLEDLLELEADGYELTEEGALVHGPFTALEILQDGLRQRGWSVQDWGHQWHPLNSIDLHQSDQARQCLQLLEALEALDDVRSVSCNLGEFPELENERS.

The protein belongs to the TACO1 family.

The protein localises to the cytoplasm. The polypeptide is Probable transcriptional regulatory protein SynRCC307_1833 (Synechococcus sp. (strain RCC307)).